Reading from the N-terminus, the 299-residue chain is Tyrosine recombinase XerC (299 aa).

The 87-residue stretch at 2–88 (SALQPLIDTY…ALRSFLDYLV (87 aa)) folds into the Core-binding (CB) domain. Residues 109 to 289 (PLPKNVSVDD…DFQHLSKIYD (181 aa)) enclose the Tyr recombinase domain. Residues Arg-148, Lys-172, His-241, Arg-244, and His-267 contribute to the active site. Tyr-276 (O-(3'-phospho-DNA)-tyrosine intermediate) is an active-site residue.

This sequence belongs to the 'phage' integrase family. XerC subfamily. As to quaternary structure, forms a cyclic heterotetrameric complex composed of two molecules of XerC and two molecules of XerD.

Its subcellular location is the cytoplasm. Site-specific tyrosine recombinase, which acts by catalyzing the cutting and rejoining of the recombining DNA molecules. The XerC-XerD complex is essential to convert dimers of the bacterial chromosome into monomers to permit their segregation at cell division. It also contributes to the segregational stability of plasmids. This Psychromonas ingrahamii (strain DSM 17664 / CCUG 51855 / 37) protein is Tyrosine recombinase XerC.